Consider the following 207-residue polypeptide: Glycerol-3-phosphate acyltransferase 1 (207 aa).

5 helical membrane-spanning segments follow: residues 3-23 (YVIASLLGYIFGCIHGSQIVG), 53-73 (IVVALIDIFKATAAIFLLLIL), 85-105 (HIYIYLTALFVIIGHNYPITM), 127-147 (IALIGIGVLILFTIATDYLAV), and 154-174 (ISFLITTYYIFGLAPFFIVVG).

The protein belongs to the PlsY family. In terms of assembly, probably interacts with PlsX.

It localises to the cell membrane. It carries out the reaction an acyl phosphate + sn-glycerol 3-phosphate = a 1-acyl-sn-glycero-3-phosphate + phosphate. It functions in the pathway lipid metabolism; phospholipid metabolism. In terms of biological role, catalyzes the transfer of an acyl group from acyl-phosphate (acyl-PO(4)) to glycerol-3-phosphate (G3P) to form lysophosphatidic acid (LPA). This enzyme utilizes acyl-phosphate as fatty acyl donor, but not acyl-CoA or acyl-ACP. This Oceanobacillus iheyensis (strain DSM 14371 / CIP 107618 / JCM 11309 / KCTC 3954 / HTE831) protein is Glycerol-3-phosphate acyltransferase 1.